A 193-amino-acid polypeptide reads, in one-letter code: Rho-related GTP-binding protein RhoA-B (193 aa).

GTP contacts are provided by residues 12 to 19 (GDGACGKT), 30 to 37 (FPEVYVPT), 59 to 63 (DTAGQ), 117 to 120 (NKKD), and 160 to 162 (SAK). (Microbial infection) O-linked (GlcNAc) tyrosine; by Yersinia Afp18 glycosylation occurs at tyrosine 34. Cysteine 190 carries the cysteine methyl ester modification. Residue cysteine 190 is the site of S-geranylgeranyl cysteine attachment. Positions 191–193 (CLL) are cleaved as a propeptide — removed in mature form.

This sequence belongs to the small GTPase superfamily. Rho family. In terms of processing, (Microbial infection) Glycosylated at Tyr-34 by Yersinia ruckeri toxin Afp18. Mono-O-GlcNAcylation by Afp18 inhibits RhoA activation by guanine nucleotide exchange factors and blocks RhoA signaling.

The protein localises to the cell membrane. Functionally, regulates a signal transduction pathway linking plasma membrane receptors to the assembly of focal adhesions and actin stress fibers. In Danio rerio (Zebrafish), this protein is Rho-related GTP-binding protein RhoA-B.